Consider the following 466-residue polypeptide: Soluble pyridine nucleotide transhydrogenase (466 aa).

E36 to C45 lines the FAD pocket.

This sequence belongs to the class-I pyridine nucleotide-disulfide oxidoreductase family. It depends on FAD as a cofactor.

Its subcellular location is the cytoplasm. It carries out the reaction NAD(+) + NADPH = NADH + NADP(+). Conversion of NADPH, generated by peripheral catabolic pathways, to NADH, which can enter the respiratory chain for energy generation. This Vibrio parahaemolyticus serotype O3:K6 (strain RIMD 2210633) protein is Soluble pyridine nucleotide transhydrogenase.